The following is a 72-amino-acid chain: uncharacterized protein (72 aa).

Residues 51 to 72 (AKGGRQKGEVVGVDDQCKEHKE) are disordered.

It belongs to the YiiE family.

This is an uncharacterized protein from Escherichia coli O157:H7.